The following is a 164-amino-acid chain: MPDQLNSRVETCYQQAETFFKRTFKRPMVSFQLRGQKAGVAHLHENLLRFNPQLYKENAEDFLRQTVPHEVAHLIAHQLFGGSIQPHGEEWQLIMRGVYELPPNRCHTYAVKRRSVIRYIYRCPCPDSDFPFTAQRHSMVRKGRRYLCRRCREPLVFSGETRTE.

One can recognise a SprT-like domain in the interval 14–156 (QQAETFFKRT…LCRRCREPLV (143 aa)). Residue H69 participates in Zn(2+) binding. E70 is an active-site residue. Position 73 (H73) interacts with Zn(2+).

The protein belongs to the SprT family. Zn(2+) is required as a cofactor.

It localises to the cytoplasm. The polypeptide is Protein SprT (Pseudomonas savastanoi pv. phaseolicola (strain 1448A / Race 6) (Pseudomonas syringae pv. phaseolicola (strain 1448A / Race 6))).